The following is a 1876-amino-acid chain: MMWKTLLCCLLAVSAAALDGWEPGKRYEYHVRGRTLTALHEVANQYSGFRFKGKLVIEPHTPSVLRGQLKDTYHMTVHRMLPDGWDQKFEERESNWERVGMKNKPFEVHVGNEFQFNKLIVTEDTPVWETNMIKGVLSQIQVNLKEVGPDPRDEQEDRLRKIFKVHESSVTGRCEVLYDITPITKFNMLPQPLVEIEEENVNVLQVMKTQNFTDCKKLPSYVHGFYNFHNVFPAQNKAGFMSRSQQTRTIVSRNKETGRFTIRSSVTFHEVVLKPELFNSQQGISVSRMNVTLEEIKSQQHIPPPRPPKDVGDLVYRYSAETGEPSQRDSAYALESNSDSSSSSSSSSSEENAANSRHRSSSSSSSSRSSEEMRDSKKHPRASTTESQPRNSRSRRSLQNSKRSINMYNDSSSSSSSSSSEEYLLPRPHIENAPNIPFMPYFVGNQGSKIGEVDPEKIVLLARTISSELQEPDTMVKKNILSRFSILTNLVRAASFSQLEEATKRLYYRVERADNGDESKLDAWKAYRDSVAQAGTPAALKMVHTWIRKEYIKDEEAAKVVAVIPHAADTPTDNYIAYFFEMVKDPVVHGEKYLNSSAVLAFSKLLRLAAVDSEAVRRYPVHVFGRMVPKNFSARVKEYIEYFANKLKNAVKDKDSHKIQVYTRALGNTGHADIIRHFEPYLVGRESVSTHERVTMVFCLDEFVKTQPSVAQYILLRLFENVGETQEIRVAALYLLMKTDVSAELFQRLAEYTKFDKNHQVVSAVQSAIRSAAKVEGPYKKETAKNAQAAVKILSSKPYDDSYSKSFILNNYRREIDVGYSRLYNQIGSRDSFMPKSVFYKLVNIIDGDRDDQAKFGGAVSSVRDVIDFIRQQFKKDDSQDELENSKYAEDDDIWDLREIANLLEMEEENVDPLEGNVHYDYFGAQRFFTLNKTSFEFREELKKYFKKPQITNINKLYNRMELKVGYPNVMGVPFFFTFKRPTLVKLTAKTFIMPLKPCDHGKPHKFPRIFNVTSDVSFVYSFDMHSHMGVVAPFNKKEYVTGIQRKHMIQIPLNVSVHVNLDKNKVAADFKPYYEDNFKVAEARGIPFTTVHDIKSLVPYVEAEHTSYIRVRPSKAYEGNFGKSVGMVYHYNFETDQQFFDYKWFSSNYFLHYPNVAFYYGWEAQPVFYYDFKLYLDSHNSPAKTVQLKASYDNRYTQPEEEEETRQHSKIRRPRSASRKHRRSRHEERAPLENLEVSDTETQREELYDIVLPAVRAGRLYYASVSVAFKGEENVYSKYEVEGALASSQVNEHISTMLRAHSNDAERKHQYAHVRVNVTMPQVPVIDYRKALEFDPTSKIQCEVHFGDTPEKKSKVYFQGKFERTDERKKFVAESDMAQLCSAQQNNKNYLLPACRNVTEEASKLDKYFFKVKYENLSEKCRNRTYKAYSYLRHYFFPYITENVYPDERKTDSVEVQVQFNEEINAVNVSVKAPILNVEFTDVRVYNKYARALFSLNPRYPLLSQVAKTAFPQYYEPTCVVDYSKVNTFDNRTYEHDMLNDWVEVMFHKPRSKIYKQVSVSAKQAHSKMVLKVLRGDEVKFEMKQPRDSSSSPELKMNDKVIEYERSPAFIHYKHELIAVAYALPSKALHLDLLNDSLVFVYDGERVMLHAGNHYRNQVRGLCGTFDGEPSTDFKAPQNCHVRDVEDLILAYTLVRDLDRSRLRDENICVREDVQLVNLTNHRHAEKSGIRPYDIDDDSSSSSSSSSSSSSSSSSSKSNSTSSSSSESNESALPRGENKLHRAQQPSRNCHMHLHRIVTHNGKQCISKLALTECAPLCREESHTTKTEAFVCFPPGPTADHYTKLVRKGVSPDFSRKTDIVNLRVTIPSRCVSKI.

An N-terminal signal peptide occupies residues 1–16 (MMWKTLLCCLLAVSAA). The Vitellogenin domain occupies 21–838 (WEPGKRYEYH…SRDSFMPKSV (818 aa)). N-linked (GlcNAc...) asparagine glycosylation is found at Asn211 and Asn290. Positions 322–424 (TGEPSQRDSA…SSSSSSEEYL (103 aa)) are disordered. Low complexity-rich tracts occupy residues 330 to 368 (SAYA…SSSR) and 387 to 404 (SQPR…SKRS). A glycan (N-linked (GlcNAc...) asparagine) is linked at Asn409. Positions 411 to 420 (SSSSSSSSSS) are enriched in low complexity. 5 N-linked (GlcNAc...) asparagine glycosylation sites follow: Asn595, Asn631, Asn932, Asn1012, and Asn1055. A disordered region spans residues 1192–1239 (SYDNRYTQPEEEEETRQHSKIRRPRSASRKHRRSRHEERAPLENLEVS). Positions 1209 to 1225 (HSKIRRPRSASRKHRRS) are enriched in basic residues. Asn1318, Asn1398, Asn1417, Asn1424, Asn1469, Asn1532, Asn1636, Asn1719, Asn1760, and Asn1770 each carry an N-linked (GlcNAc...) asparagine glycan. Residues 1518-1703 (PTCVVDYSKV…TLVRDLDRSR (186 aa)) enclose the VWFD domain. Cys1520 and Cys1664 are oxidised to a cystine. The segment at 1729–1788 (SGIRPYDIDDDSSSSSSSSSSSSSSSSSSKSNSTSSSSSESNESALPRGENKLHRAQQPS) is disordered. Low complexity predominate over residues 1741-1772 (SSSSSSSSSSSSSSSSSKSNSTSSSSSESNES).

The protein localises to the secreted. Precursor of the egg-yolk proteins that are sources of nutrients during embryonic development. The sequence is that of Vitellogenin-2 (VG2) from Periplaneta americana (American cockroach).